The sequence spans 90 residues: Probable Fe(2+)-trafficking protein (90 aa).

The protein belongs to the Fe(2+)-trafficking protein family.

Could be a mediator in iron transactions between iron acquisition and iron-requiring processes, such as synthesis and/or repair of Fe-S clusters in biosynthetic enzymes. This Polynucleobacter asymbioticus (strain DSM 18221 / CIP 109841 / QLW-P1DMWA-1) (Polynucleobacter necessarius subsp. asymbioticus) protein is Probable Fe(2+)-trafficking protein.